The primary structure comprises 202 residues: GTP-binding protein rho1 (202 aa).

Gly13–Thr20 is a GTP binding site. An Effector region motif is present at residues Tyr35–Tyr43. Residues Asp60–Gln64 and Cys118–Asp121 contribute to the GTP site. Cys199 carries the post-translational modification Cysteine methyl ester. Cys199 is lipidated: S-geranylgeranyl cysteine. The propeptide at Ile200 to Leu202 is removed in mature form.

This sequence belongs to the small GTPase superfamily. Rho family.

It localises to the cell membrane. Involved in the regulation of cell wall growth and actin cytoskeleton organization. Activates (1,3)-beta-D-glucan synthase. This Schizosaccharomyces pombe (strain 972 / ATCC 24843) (Fission yeast) protein is GTP-binding protein rho1 (rho1).